Here is a 182-residue protein sequence, read N- to C-terminus: Large ribosomal subunit protein bL25 (182 aa).

The protein belongs to the bacterial ribosomal protein bL25 family. CTC subfamily. As to quaternary structure, part of the 50S ribosomal subunit; part of the 5S rRNA/L5/L18/L25 subcomplex. Contacts the 5S rRNA. Binds to the 5S rRNA independently of L5 and L18.

In terms of biological role, this is one of the proteins that binds to the 5S RNA in the ribosome where it forms part of the central protuberance. The chain is Large ribosomal subunit protein bL25 from Borrelia hermsii (strain HS1 / DAH).